We begin with the raw amino-acid sequence, 400 residues long: S-adenosylmethionine synthase (400 aa).

136 to 141 (GTGSTD) provides a ligand contact to ATP.

Belongs to the AdoMet synthase 2 family. The cofactor is Mg(2+).

The catalysed reaction is L-methionine + ATP + H2O = S-adenosyl-L-methionine + phosphate + diphosphate. Its pathway is amino-acid biosynthesis; S-adenosyl-L-methionine biosynthesis; S-adenosyl-L-methionine from L-methionine: step 1/1. Functionally, catalyzes the formation of S-adenosylmethionine from methionine and ATP. This is S-adenosylmethionine synthase from Methanospirillum hungatei JF-1 (strain ATCC 27890 / DSM 864 / NBRC 100397 / JF-1).